Reading from the N-terminus, the 450-residue chain is tRNA modification GTPase MnmE (450 aa).

Positions 20, 78, and 117 each coordinate (6S)-5-formyl-5,6,7,8-tetrahydrofolate. Positions 211-372 constitute a TrmE-type G domain; sequence GFRMVIVGKP…LEEAIYRETQ (162 aa). A K(+)-binding site is contributed by Asn-221. GTP-binding positions include 221–226, 240–246, and 265–268; these read NVGKST, TDIPGTT, and DTAG. Ser-225 is a binding site for Mg(2+). K(+) contacts are provided by Thr-240, Ile-242, and Thr-245. Mg(2+) is bound at residue Thr-246. Lys-450 lines the (6S)-5-formyl-5,6,7,8-tetrahydrofolate pocket.

This sequence belongs to the TRAFAC class TrmE-Era-EngA-EngB-Septin-like GTPase superfamily. TrmE GTPase family. As to quaternary structure, homodimer. Heterotetramer of two MnmE and two MnmG subunits. K(+) is required as a cofactor.

Its subcellular location is the cytoplasm. Exhibits a very high intrinsic GTPase hydrolysis rate. Involved in the addition of a carboxymethylaminomethyl (cmnm) group at the wobble position (U34) of certain tRNAs, forming tRNA-cmnm(5)s(2)U34. The sequence is that of tRNA modification GTPase MnmE from Thermotoga petrophila (strain ATCC BAA-488 / DSM 13995 / JCM 10881 / RKU-1).